We begin with the raw amino-acid sequence, 316 residues long: Ornithine carbamoyltransferase (316 aa).

Carbamoyl phosphate is bound by residues 59–62, Gln-86, Arg-110, and 137–140; these read STRT and HPCQ. L-ornithine contacts are provided by residues Asn-168, Asp-232, and 236–237; that span reads SM. Residues 273-274 and Arg-301 contribute to the carbamoyl phosphate site; that span reads CL.

The protein belongs to the aspartate/ornithine carbamoyltransferase superfamily. OTCase family.

The protein resides in the cytoplasm. The catalysed reaction is carbamoyl phosphate + L-ornithine = L-citrulline + phosphate + H(+). It participates in amino-acid biosynthesis; L-arginine biosynthesis; L-arginine from L-ornithine and carbamoyl phosphate: step 1/3. Functionally, reversibly catalyzes the transfer of the carbamoyl group from carbamoyl phosphate (CP) to the N(epsilon) atom of ornithine (ORN) to produce L-citrulline. In Listeria innocua serovar 6a (strain ATCC BAA-680 / CLIP 11262), this protein is Ornithine carbamoyltransferase.